The sequence spans 193 residues: Recombination protein RecR (193 aa).

Residues 61–76 (CASCNALSESEICEIC) form a C4-type zinc finger. Positions 84–170 (SQLCMVLHPR…TFTKIAQGVP (87 aa)) constitute a Toprim domain.

It belongs to the RecR family.

Functionally, may play a role in DNA repair. It seems to be involved in an RecBC-independent recombinational process of DNA repair. It may act with RecF and RecO. This Helicobacter pylori (strain Shi470) protein is Recombination protein RecR.